Consider the following 197-residue polypeptide: Potassium-transporting ATPase KdpC subunit (197 aa).

A helical membrane pass occupies residues 9–29; the sequence is LVVTLLLAALLCGAYPVLVTG.

It belongs to the KdpC family. As to quaternary structure, the system is composed of three essential subunits: KdpA, KdpB and KdpC.

The protein resides in the cell inner membrane. In terms of biological role, part of the high-affinity ATP-driven potassium transport (or Kdp) system, which catalyzes the hydrolysis of ATP coupled with the electrogenic transport of potassium into the cytoplasm. This subunit acts as a catalytic chaperone that increases the ATP-binding affinity of the ATP-hydrolyzing subunit KdpB by the formation of a transient KdpB/KdpC/ATP ternary complex. The polypeptide is Potassium-transporting ATPase KdpC subunit (Nitratidesulfovibrio vulgaris (strain DSM 19637 / Miyazaki F) (Desulfovibrio vulgaris)).